Reading from the N-terminus, the 409-residue chain is MRLKKTLLSIAIAAATFTPAMHSIAAPLQLQATLDQESQIQSSNTWLEIDLGQFKQNIEQFKSHMNDQTKICAVMKADAYGNGIAGLMPTIIEQQIPCVAIASNAEAQVVRDSGFKGQLMRVRSAEIGEIEGALDLNVEELIGTLDQAKAIAALSKKANKTVKVHLALNDGGMGRNGIDMTTENGKKEALAIAKQSGVEIVGIMTHFPNYNAEEVRAKLGSFKESSAWLIKEANLKREDILLHVANSYTALNVPEAQLDMVRPGGVLYGDLPTNLEYPSIVSFKTRVASLHHLPKNSTVGYDSSFTTTKESVMANLPVGYSDGYPRKMGNTADVLINGQRAKVVGVTSMNTTMIDVSDIKGVKPGSEVVLFGNQKSQTINAAEIEKNADVIFPELYTIWGTSNPRVYVK.

Positions M1–A25 are cleaved as a signal peptide. C72 and C98 are disulfide-bonded. Residue K76 is the Proton acceptor of the active site. K76 bears the N6-(pyridoxal phosphate)lysine mark. R175 lines the substrate pocket. Y301 serves as the catalytic Proton acceptor. M349 lines the substrate pocket.

Belongs to the alanine racemase family. Bsr subfamily. Pyridoxal 5'-phosphate is required as a cofactor.

It is found in the periplasm. The catalysed reaction is an L-alpha-amino acid = a D-alpha-amino acid. It carries out the reaction L-lysine = D-lysine. The enzyme catalyses L-arginine = D-arginine. Its function is as follows. Amino-acid racemase able to utilize a broad range of substrates. The chain is Broad specificity amino-acid racemase from Vibrio parahaemolyticus serotype O3:K6 (strain RIMD 2210633).